We begin with the raw amino-acid sequence, 465 residues long: ATP-dependent rRNA helicase rrp3 (465 aa).

Residues 1–22 are compositionally biased toward basic and acidic residues; that stretch reads MAPSEKKLTEDKKNSSLNKKIE. The disordered stretch occupies residues 1–44; that stretch reads MAPSEKKLTEDKKNSSLNKKIETSNSSSEKSSENNNGDSQNNEA. Residues 23–36 are compositionally biased toward low complexity; the sequence is TSNSSSEKSSENNN. A Q motif motif is present at residues 46–74; the sequence is KTFKELGVIDELCEACEKLGFKTPTPIQQ. Residues 77 to 248 enclose the Helicase ATP-binding domain; the sequence is IPVVLNKRDV…RASLHQPVRV (172 aa). 90–97 is an ATP binding site; it reads AQTGSGKT. Residues 196 to 199 carry the DEAD box motif; sequence DEAD. The region spanning 275-419 is the Helicase C-terminal domain; the sequence is YLVYLVNELA…EYEIDKEGVF (145 aa). Basic residues predominate over residues 442–453; the sequence is RRKSKGKLHTKR. The segment at 442-465 is disordered; it reads RRKSKGKLHTKRKRDDLDREEQIY. Over residues 454 to 465 the composition is skewed to basic and acidic residues; that stretch reads KRDDLDREEQIY.

The protein belongs to the DEAD box helicase family. DDX47/RRP3 subfamily. Interacts with the SSU processome.

It localises to the nucleus. It catalyses the reaction ATP + H2O = ADP + phosphate + H(+). Its function is as follows. ATP-dependent rRNA helicase required for pre-ribosomal RNA processing. Involved in the maturation of the 35S-pre-rRNA and to its cleavage to mature 18S rRNA. In Schizosaccharomyces pombe (strain 972 / ATCC 24843) (Fission yeast), this protein is ATP-dependent rRNA helicase rrp3.